Consider the following 298-residue polypeptide: ATP synthase gamma chain (298 aa).

The protein belongs to the ATPase gamma chain family. F-type ATPases have 2 components, CF(1) - the catalytic core - and CF(0) - the membrane proton channel. CF(1) has five subunits: alpha(3), beta(3), gamma(1), delta(1), epsilon(1). CF(0) has three main subunits: a, b and c.

It localises to the cell inner membrane. Its function is as follows. Produces ATP from ADP in the presence of a proton gradient across the membrane. The gamma chain is believed to be important in regulating ATPase activity and the flow of protons through the CF(0) complex. In Francisella tularensis subsp. holarctica (strain FTNF002-00 / FTA), this protein is ATP synthase gamma chain.